The sequence spans 219 residues: ATP phosphoribosyltransferase (219 aa).

This sequence belongs to the ATP phosphoribosyltransferase family. Short subfamily. Heteromultimer composed of HisG and HisZ subunits.

It is found in the cytoplasm. It catalyses the reaction 1-(5-phospho-beta-D-ribosyl)-ATP + diphosphate = 5-phospho-alpha-D-ribose 1-diphosphate + ATP. The protein operates within amino-acid biosynthesis; L-histidine biosynthesis; L-histidine from 5-phospho-alpha-D-ribose 1-diphosphate: step 1/9. Catalyzes the condensation of ATP and 5-phosphoribose 1-diphosphate to form N'-(5'-phosphoribosyl)-ATP (PR-ATP). Has a crucial role in the pathway because the rate of histidine biosynthesis seems to be controlled primarily by regulation of HisG enzymatic activity. This is ATP phosphoribosyltransferase from Syntrophotalea carbinolica (strain DSM 2380 / NBRC 103641 / GraBd1) (Pelobacter carbinolicus).